The sequence spans 295 residues: MPKPALRRVMTATVAAVGTLALGLTDATAHAAPAQATPTLDYVALGDSYSAGSGVLPVDPANLLCLRSTANYPHVIADTTGARLTDVTCGAAQTADFTRAQYPGVAPQLDALGTGTDLVTLTIGGNDNSTFINAITACGTAGVLSGGKGSPCKDRHGTSFDDEIEANTYPALKEALLGVRARAPHARVAALGYPWITPATADPSCFLKLPLAAGDVPYLRAIQAHLNDAVRRAAEETGATYVDFSGVSDGHDACEAPGTRWIEPLLFGHSLVPVHPNALGERRMAEHTMDVLGLD.

Positions 1–31 (MPKPALRRVMTATVAAVGTLALGLTDATAHA) are cleaved as a signal peptide. Residue serine 48 is the Nucleophile of the active site. Intrachain disulfides connect cysteine 65-cysteine 89, cysteine 138-cysteine 152, and cysteine 205-cysteine 254. Histidine 275 is a catalytic residue.

It belongs to the 'GDSL' lipolytic enzyme family. As to quaternary structure, monomer.

Its subcellular location is the secreted. It catalyses the reaction a triacylglycerol + H2O = a diacylglycerol + a fatty acid + H(+). Its activity is regulated as follows. Strongly inhibited by Ag(+). The cations Ca(2+) and Mg(2+) do not significantly reduce the lipolytic activity of SCO7513, whereas high concentrations of Co(2+) and Cu(2+) partially inhibit it. Is not inhibited by DTT in vitro. Is resistant to PMSF inhibition, except in the presence of Ca(2+). Functionally, catalyzes the hydrolysis of fatty acid esters with a preference for long chain fatty acids (C16-C18). The sequence is that of Lipase 2 from Streptomyces coelicolor (strain ATCC BAA-471 / A3(2) / M145).